Consider the following 515-residue polypeptide: Microtubule-associated protein 70-4 (515 aa).

2 coiled-coil regions span residues 26-106 (VVDE…ALSA) and 136-351 (LESD…NTSA). The required for targeting to microtubules stretch occupies residues 208 to 410 (LLEKSNRQQV…KQPGSETEAA (203 aa)). The tract at residues 340-515 (DDMRNESSNT…VKSTKDSCEI (176 aa)) is disordered. The span at 345–362 (ESSNTSASNKDNATSKQA) shows a compositional bias: polar residues. Residues 364–374 (PKRSSSQPRRP) show a composition bias toward low complexity. Basic and acidic residues-rich tracts occupy residues 409–425 (AAEK…DSPR), 450–461 (KVADDAGKENKE), and 484–515 (SEHE…SCEI).

Belongs to the MAP70 family.

It is found in the cytoplasm. Its subcellular location is the cytoskeleton. Plant-specific protein that interact with microtubules. The protein is Microtubule-associated protein 70-4 (MAP70.4) of Oryza sativa subsp. japonica (Rice).